The sequence spans 344 residues: Pyruvate dehydrogenase E1 component subunit alpha (344 aa).

Pyruvate is bound by residues His-55, Tyr-81, Arg-82, Ala-130, Ile-132, Asp-168, Gly-169, and Asn-197. Residues Tyr-81, Arg-82, Ala-130, Ile-132, Asp-168, Gly-169, Asn-197, and His-266 each contribute to the thiamine diphosphate site. A Mg(2+)-binding site is contributed by Asp-168. Asn-197 contacts Mg(2+).

As to quaternary structure, heterodimer of an alpha and a beta chain. Thiamine diphosphate is required as a cofactor. The cofactor is Mg(2+).

The protein localises to the plastid. Its subcellular location is the chloroplast. The enzyme catalyses N(6)-[(R)-lipoyl]-L-lysyl-[protein] + pyruvate + H(+) = N(6)-[(R)-S(8)-acetyldihydrolipoyl]-L-lysyl-[protein] + CO2. In terms of biological role, the pyruvate dehydrogenase complex catalyzes the overall conversion of pyruvate to acetyl-CoA and CO(2). It contains multiple copies of three enzymatic components: pyruvate dehydrogenase (E1), dihydrolipoamide acetyltransferase (E2) and lipoamide dehydrogenase (E3). The chain is Pyruvate dehydrogenase E1 component subunit alpha (pdhA) from Porphyra purpurea (Red seaweed).